We begin with the raw amino-acid sequence, 503 residues long: MFYAHAFGGYDENLHAFPGISSTVANDVRKYSVVSVYNKKYNIVKNKYMWCNSQVNKRYIGALLPMFECNEYLQIGDPIHDLEGNQISIVTYRHKNYYALSGIGYESLDLCLEGVGIHHHVLETGNAVYGKVQHEYSTIKEKAKEMNALKPGPIIDYHVWIGDCVCQVTTVDVHGKEIMRMRFKRGAVLPIPNLVKVKVGEENDTINLSTSISALLNSGGGTIEVTSKEERVDYVLMKRLESIHHLWSVVYDHLNVVNGEERCYVHMHSSHQSPMLSTVKTNLYMKTMGACLQMDSMEALEYLSELKESGGRSPRPELQKFEYPDGVKDTESIERLAEEFFNRSELQAGESVKFGNSINVKHTSVSAKQLRTRIRQQLPSILSSFANTKGGYLFIGVDNNTHKVIGFTVGHDYLKLVESDIEKYIQKLPVVHFCKKKEDIKYACRFIKVYKPGDETTSTYVCAIKVERCCCAVFADWPESWYMDTSGSMKKYSPDEWVSHIKF.

Residue histidine 15 is the Proton donor of the active site. Tyrosine 136 acts as the Shared with catalytic histidine of dimeric partner in catalysis. The active-site Proton acceptor; shared with catalytic histidine of dimeric partner is lysine 140.

It in the N-terminal section; belongs to the poxin family. In the C-terminal section; belongs to the Schlafen protein family. Subgroup poxviridae B3 subfamily. In terms of assembly, homodimer.

It catalyses the reaction 2',3'-cGAMP + H2O = Gp(2'-5')Ap(3') + H(+). In terms of biological role, nuclease that is responsible for viral evasion of host cGAS-STING innate immunity. Cleaves 2',3'-cGAMP which is produced by host cGAS following recognition of cytosolic DNA and blocks the subsequent 2',3'-cGAMP-mediated activation of TMEM173/STING, which normally spreads to adjacent cells and activates the interferon and NF-kappa-B immune responses. The protein is Poxin-Schlafen (OPG188) of Cynomys gunnisoni (Gunnison's prairie dog).